A 490-amino-acid polypeptide reads, in one-letter code: Colicin-5 (490 aa).

Positions 1–20 (MDKVTDNSPDVESTESTEGS) are enriched in polar residues. 2 disordered regions span residues 1–29 (MDKVTDNSPDVESTESTEGSFPTVGVDTG) and 146–171 (QKAREEAEAAEKALREAERQRDEIAR). Over residues 146–170 (QKAREEAEAAEKALREAERQRDEIA) the composition is skewed to basic and acidic residues. The chain crosses the membrane as a helical span at residues 447–467 (IVALMFSFIVGVPLGFWGIAI).

The protein belongs to the channel forming colicin family.

The protein localises to the host membrane. In terms of biological role, this colicin is a channel-forming colicin. This class of transmembrane toxins depolarize the cytoplasmic membrane, leading to dissipation of cellular energy. Functionally, colicins are polypeptide toxins produced by and active against E.coli and closely related bacteria. The protein is Colicin-5 (cfa) of Escherichia coli.